A 370-amino-acid chain; its full sequence is Probable endopolygalacturonase A (370 aa).

Residues 1–19 (MPSAKPLFCLATLAGAALA) form the signal peptide. The propeptide occupies 20-32 (APAPSRVSDFTKR). A disulfide bridge connects residues cysteine 35 and cysteine 50. PbH1 repeat units lie at residues 162–192 (SDNL…DISE), 193–214 (STYI…AINS), 215–235 (GENI…SIGS), 244–265 (VKNV…RIKT), 273–295 (VEDI…VIEQ), and 307–352 (SNGV…DITG). The active-site Proton donor is the aspartate 207. Cysteines 209 and 225 form a disulfide. Histidine 229 is an active-site residue. Asparagine 246 carries an N-linked (GlcNAc...) asparagine glycan. Cystine bridges form between cysteine 335–cysteine 340 and cysteine 359–cysteine 368.

Belongs to the glycosyl hydrolase 28 family.

The protein localises to the secreted. The enzyme catalyses (1,4-alpha-D-galacturonosyl)n+m + H2O = (1,4-alpha-D-galacturonosyl)n + (1,4-alpha-D-galacturonosyl)m.. In terms of biological role, involved in maceration and soft-rotting of plant tissue. Hydrolyzes the 1,4-alpha glycosidic bonds of de-esterified pectate in the smooth region of the plant cell wall. The protein is Probable endopolygalacturonase A (pgaA) of Aspergillus niger (strain ATCC MYA-4892 / CBS 513.88 / FGSC A1513).